Consider the following 249-residue polypeptide: Ubiquinone biosynthesis protein COQ4 homolog, mitochondrial (249 aa).

The Zn(2+) site is built by His134, Asp135, His138, and Glu150.

It belongs to the COQ4 family. As to quaternary structure, component of a multi-subunit COQ enzyme complex. It depends on Zn(2+) as a cofactor.

The protein localises to the mitochondrion inner membrane. It carries out the reaction a 4-hydroxy-3-methoxy-5-(all-trans-polyprenyl)benzoate + H(+) = a 2-methoxy-6-(all-trans-polyprenyl)phenol + CO2. It functions in the pathway cofactor biosynthesis; ubiquinone biosynthesis. Functionally, lyase that catalyzes the C1-decarboxylation of 4-hydroxy-3-methoxy-5-(all-trans-polyprenyl)benzoic acid into 2-methoxy-6-(all-trans-polyprenyl)phenol during ubiquinone biosynthesis. In Trypanosoma brucei brucei (strain 927/4 GUTat10.1), this protein is Ubiquinone biosynthesis protein COQ4 homolog, mitochondrial.